The chain runs to 128 residues: Protein FAM229A (128 aa).

The segment at 1–96 (MQSSPSTLGP…VATDQNPVRP (96 aa)) is disordered.

This sequence belongs to the FAM229 family.

The polypeptide is Protein FAM229A (Fam229a) (Mus musculus (Mouse)).